A 497-amino-acid polypeptide reads, in one-letter code: Protein nucleotidyltransferase YdiU (497 aa).

ATP-binding residues include G88, G90, R91, K110, D122, G123, R173, and R180. Residue D249 is the Proton acceptor of the active site. Mg(2+)-binding residues include N250 and D259. Residue D259 participates in ATP binding. The segment at 477–497 is disordered; that stretch reads FARYAEPPEGGGRGYRTFCGT.

It belongs to the SELO family. It depends on Mg(2+) as a cofactor. Requires Mn(2+) as cofactor.

The catalysed reaction is L-seryl-[protein] + ATP = 3-O-(5'-adenylyl)-L-seryl-[protein] + diphosphate. The enzyme catalyses L-threonyl-[protein] + ATP = 3-O-(5'-adenylyl)-L-threonyl-[protein] + diphosphate. It carries out the reaction L-tyrosyl-[protein] + ATP = O-(5'-adenylyl)-L-tyrosyl-[protein] + diphosphate. It catalyses the reaction L-histidyl-[protein] + UTP = N(tele)-(5'-uridylyl)-L-histidyl-[protein] + diphosphate. The catalysed reaction is L-seryl-[protein] + UTP = O-(5'-uridylyl)-L-seryl-[protein] + diphosphate. The enzyme catalyses L-tyrosyl-[protein] + UTP = O-(5'-uridylyl)-L-tyrosyl-[protein] + diphosphate. Functionally, nucleotidyltransferase involved in the post-translational modification of proteins. It can catalyze the addition of adenosine monophosphate (AMP) or uridine monophosphate (UMP) to a protein, resulting in modifications known as AMPylation and UMPylation. The protein is Protein nucleotidyltransferase YdiU of Methylorubrum extorquens (strain PA1) (Methylobacterium extorquens).